The chain runs to 179 residues: RNA polymerase sigma-E factor (179 aa).

The Polymerase core binding motif lies at Asp-36 to Trp-49. The H-T-H motif DNA-binding region spans Thr-130–His-149.

Belongs to the sigma-70 factor family. ECF subfamily.

It is found in the cytoplasm. Sigma factors are initiation factors that promote the attachment of RNA polymerase to specific initiation sites and are then released. This sigma factor is required for normal cell wall integrity; it is recruited by RNA polymerase to transcribe genes with cell wall-related functions. In Streptomyces avermitilis (strain ATCC 31267 / DSM 46492 / JCM 5070 / NBRC 14893 / NCIMB 12804 / NRRL 8165 / MA-4680), this protein is RNA polymerase sigma-E factor (sigE).